Reading from the N-terminus, the 492-residue chain is N-succinylglutamate 5-semialdehyde dehydrogenase (492 aa).

220-225 (GSANTG) provides a ligand contact to NAD(+). Residues glutamate 243 and cysteine 277 contribute to the active site.

It belongs to the aldehyde dehydrogenase family. AstD subfamily.

The catalysed reaction is N-succinyl-L-glutamate 5-semialdehyde + NAD(+) + H2O = N-succinyl-L-glutamate + NADH + 2 H(+). The protein operates within amino-acid degradation; L-arginine degradation via AST pathway; L-glutamate and succinate from L-arginine: step 4/5. Catalyzes the NAD-dependent reduction of succinylglutamate semialdehyde into succinylglutamate. This chain is N-succinylglutamate 5-semialdehyde dehydrogenase, found in Escherichia fergusonii (strain ATCC 35469 / DSM 13698 / CCUG 18766 / IAM 14443 / JCM 21226 / LMG 7866 / NBRC 102419 / NCTC 12128 / CDC 0568-73).